Consider the following 97-residue polypeptide: Probable lipopolysaccharide assembly protein A (97 aa).

2 consecutive transmembrane segments (helical) span residues 1–21 and 46–66; these read MIKY…AITI and VAIL…FFYI. The stretch at 67–95 forms a coiled coil; sequence KLKLKNMALARQVKRQTLQINELTTTRDK.

Belongs to the LapA family.

It localises to the cell inner membrane. Functionally, involved in the assembly of lipopolysaccharide (LPS). The sequence is that of Probable lipopolysaccharide assembly protein A from Haemophilus influenzae (strain ATCC 51907 / DSM 11121 / KW20 / Rd).